The sequence spans 490 residues: GTPase Der (490 aa).

EngA-type G domains follow at residues 3-166 (PVVA…AEAM) and 200-373 (IKLA…DSAT). Residues 9-16 (GRPNVGKS), 56-60 (DTGGI), 118-121 (NKVD), 206-213 (GKPNVGKS), 253-257 (DTAGV), and 318-321 (NKWD) each bind GTP. The KH-like domain maps to 374–458 (RRVSTSMLTR…PIQLRFQEGG (85 aa)).

The protein belongs to the TRAFAC class TrmE-Era-EngA-EngB-Septin-like GTPase superfamily. EngA (Der) GTPase family. As to quaternary structure, associates with the 50S ribosomal subunit.

GTPase that plays an essential role in the late steps of ribosome biogenesis. This chain is GTPase Der, found in Shewanella halifaxensis (strain HAW-EB4).